Consider the following 423-residue polypeptide: Putative RING-H2 finger protein ATL49 (423 aa).

Residues 43–63 (ILLIIIILSIIFFISGLLHIL) traverse the membrane as a helical segment. Residues 126 to 168 (CPVCLCEFETEDKLRLLPKCSHAFHVECIDTWLLSHSTCPLCR) form an RING-type; atypical zinc finger. 2 disordered regions span residues 213–236 (NNDS…DMDG) and 377–399 (HRIP…KTPS). Over residues 379–389 (IPPEESLKSEN) the composition is skewed to basic and acidic residues.

Belongs to the RING-type zinc finger family. ATL subfamily.

Its subcellular location is the membrane. It catalyses the reaction S-ubiquitinyl-[E2 ubiquitin-conjugating enzyme]-L-cysteine + [acceptor protein]-L-lysine = [E2 ubiquitin-conjugating enzyme]-L-cysteine + N(6)-ubiquitinyl-[acceptor protein]-L-lysine.. The protein operates within protein modification; protein ubiquitination. Functionally, may be involved in female gametophyte development. This chain is Putative RING-H2 finger protein ATL49 (ATL49), found in Arabidopsis thaliana (Mouse-ear cress).